The sequence spans 215 residues: Pyridoxine/pyridoxamine 5'-phosphate oxidase (215 aa).

Substrate is bound by residues 9-12 (RRDY) and K69. Residues 64–69 (RVLLLK), 79–80 (FT), K86, and Q108 each bind FMN. Substrate is bound by residues Y126, R130, and S134. FMN is bound by residues 143–144 (QS) and W188. 194–196 (RLH) lines the substrate pocket. R198 is a binding site for FMN.

The protein belongs to the pyridoxamine 5'-phosphate oxidase family. Homodimer. FMN serves as cofactor.

It carries out the reaction pyridoxamine 5'-phosphate + O2 + H2O = pyridoxal 5'-phosphate + H2O2 + NH4(+). The catalysed reaction is pyridoxine 5'-phosphate + O2 = pyridoxal 5'-phosphate + H2O2. Its pathway is cofactor metabolism; pyridoxal 5'-phosphate salvage; pyridoxal 5'-phosphate from pyridoxamine 5'-phosphate: step 1/1. It functions in the pathway cofactor metabolism; pyridoxal 5'-phosphate salvage; pyridoxal 5'-phosphate from pyridoxine 5'-phosphate: step 1/1. In terms of biological role, catalyzes the oxidation of either pyridoxine 5'-phosphate (PNP) or pyridoxamine 5'-phosphate (PMP) into pyridoxal 5'-phosphate (PLP). This chain is Pyridoxine/pyridoxamine 5'-phosphate oxidase, found in Pseudomonas entomophila (strain L48).